A 260-amino-acid polypeptide reads, in one-letter code: MIIVLSPAKSLDYDTPAHVQSYTKPAFVDDASELIDGLRKLSPQDIATLMDISDPLARLNFQRYADWSTTFTPANAKQAVLAFNGDVYEGFDAKSLSSADLDYAQQHVRVLSGLYGLLRPLDLLQPYRLEMGTRFPTARGKDLYAFWGDRITRALNEQLETRSGAARVLVNCASTEYFKSVKPKLLAAPVITPVFEDWKGGRYKIISFHAKRARGLMARFIVENRITDPKALKDFATEGYAFDAAASNDSTYVYRRRVGE.

The protein belongs to the UPF0246 family.

The polypeptide is UPF0246 protein Bcep18194_A5551 (Burkholderia lata (strain ATCC 17760 / DSM 23089 / LMG 22485 / NCIMB 9086 / R18194 / 383)).